The chain runs to 427 residues: Adenylosuccinate synthetase (427 aa).

Residues 12-18 (GDEGKGK) and 40-42 (GHT) contribute to the GTP site. The active-site Proton acceptor is Asp-13. Residues Asp-13 and Gly-40 each contribute to the Mg(2+) site. IMP-binding positions include 13–16 (DEGK), 38–41 (NAGH), Thr-128, Arg-142, Gln-223, Thr-238, and Arg-302. The active-site Proton donor is His-41. 298 to 304 (VTTGRDR) contributes to the substrate binding site. Residues Arg-304, 330–332 (KLD), and 412–414 (GVG) contribute to the GTP site.

Belongs to the adenylosuccinate synthetase family. In terms of assembly, homodimer. Requires Mg(2+) as cofactor.

It localises to the cytoplasm. The enzyme catalyses IMP + L-aspartate + GTP = N(6)-(1,2-dicarboxyethyl)-AMP + GDP + phosphate + 2 H(+). It functions in the pathway purine metabolism; AMP biosynthesis via de novo pathway; AMP from IMP: step 1/2. In terms of biological role, plays an important role in the de novo pathway of purine nucleotide biosynthesis. Catalyzes the first committed step in the biosynthesis of AMP from IMP. This Streptomyces griseus subsp. griseus (strain JCM 4626 / CBS 651.72 / NBRC 13350 / KCC S-0626 / ISP 5235) protein is Adenylosuccinate synthetase.